The sequence spans 258 residues: Snake venom serine proteinase 8 (258 aa).

The signal sequence occupies residues 1 to 18 (MVLIRVLANLLILQLSYA). A propeptide spanning residues 19 to 24 (QKSSEL) is cleaved from the precursor. One can recognise a Peptidase S1 domain in the interval 25 to 249 (VIGGDECNIN…YNDWIQSIIA (225 aa)). Disulfide bonds link Cys-31-Cys-163, Cys-50-Cys-66, Cys-98-Cys-256, Cys-142-Cys-210, Cys-174-Cys-189, and Cys-200-Cys-225. Residue Asn-44 is glycosylated (N-linked (GlcNAc...) asparagine). Active-site charge relay system residues include His-65 and Asp-110. The active-site Charge relay system is Ser-204.

This sequence belongs to the peptidase S1 family. Snake venom subfamily. In terms of assembly, monomer. As to expression, expressed by the venom gland.

It is found in the secreted. Snake venom serine protease that may act in the hemostasis system of the prey. This Crotalus adamanteus (Eastern diamondback rattlesnake) protein is Snake venom serine proteinase 8.